The sequence spans 42 residues: Potassium channel toxin gamma-KTx 1.4 (42 aa).

4 disulfides stabilise this stretch: Cys-5–Cys-23, Cys-11–Cys-34, Cys-20–Cys-39, and Cys-24–Cys-41.

The protein belongs to the ergtoxin family. Gamma-KTx 1 subfamily. In terms of tissue distribution, expressed by the venom gland.

It localises to the secreted. Its function is as follows. Blocks Kv11/ERG potassium channels. In Centruroides sculpturatus (Arizona bark scorpion), this protein is Potassium channel toxin gamma-KTx 1.4.